Here is a 157-residue protein sequence, read N- to C-terminus: S-ribosylhomocysteine lyase (157 aa).

Fe cation contacts are provided by H54, H58, and C124.

It belongs to the LuxS family. As to quaternary structure, homodimer. Requires Fe cation as cofactor.

It catalyses the reaction S-(5-deoxy-D-ribos-5-yl)-L-homocysteine = (S)-4,5-dihydroxypentane-2,3-dione + L-homocysteine. Involved in the synthesis of autoinducer 2 (AI-2) which is secreted by bacteria and is used to communicate both the cell density and the metabolic potential of the environment. The regulation of gene expression in response to changes in cell density is called quorum sensing. Catalyzes the transformation of S-ribosylhomocysteine (RHC) to homocysteine (HC) and 4,5-dihydroxy-2,3-pentadione (DPD). This chain is S-ribosylhomocysteine lyase, found in Lactobacillus acidophilus (strain ATCC 700396 / NCK56 / N2 / NCFM).